The sequence spans 209 residues: Uracil phosphoribosyltransferase (209 aa).

Residues arginine 79, arginine 104, and 131 to 139 (DPMLATGGS) each bind 5-phospho-alpha-D-ribose 1-diphosphate. Residues isoleucine 194 and 199–201 (GDA) contribute to the uracil site. Aspartate 200 serves as a coordination point for 5-phospho-alpha-D-ribose 1-diphosphate.

It belongs to the UPRTase family. It depends on Mg(2+) as a cofactor.

The enzyme catalyses UMP + diphosphate = 5-phospho-alpha-D-ribose 1-diphosphate + uracil. The protein operates within pyrimidine metabolism; UMP biosynthesis via salvage pathway; UMP from uracil: step 1/1. With respect to regulation, allosterically activated by GTP. Its function is as follows. Catalyzes the conversion of uracil and 5-phospho-alpha-D-ribose 1-diphosphate (PRPP) to UMP and diphosphate. This is Uracil phosphoribosyltransferase from Alkaliphilus oremlandii (strain OhILAs) (Clostridium oremlandii (strain OhILAs)).